Reading from the N-terminus, the 448-residue chain is Tubulin beta-1 chain (448 aa).

Gln11, Glu69, Ser138, Gly142, Thr143, Gly144, Asn204, and Asn226 together coordinate GTP. Residue Glu69 coordinates Mg(2+). The tract at residues 427 to 448 (DATADEEGDLQEGESEYIEQEE) is disordered. Residues 429-448 (TADEEGDLQEGESEYIEQEE) show a composition bias toward acidic residues.

Belongs to the tubulin family. In terms of assembly, dimer of alpha and beta chains. A typical microtubule is a hollow water-filled tube with an outer diameter of 25 nm and an inner diameter of 15 nM. Alpha-beta heterodimers associate head-to-tail to form protofilaments running lengthwise along the microtubule wall with the beta-tubulin subunit facing the microtubule plus end conferring a structural polarity. Microtubules usually have 13 protofilaments but different protofilament numbers can be found in some organisms and specialized cells. Mg(2+) is required as a cofactor.

It is found in the cytoplasm. Its subcellular location is the cytoskeleton. In terms of biological role, tubulin is the major constituent of microtubules, a cylinder consisting of laterally associated linear protofilaments composed of alpha- and beta-tubulin heterodimers. Microtubules grow by the addition of GTP-tubulin dimers to the microtubule end, where a stabilizing cap forms. Below the cap, tubulin dimers are in GDP-bound state, owing to GTPase activity of alpha-tubulin. The polypeptide is Tubulin beta-1 chain (Brugia pahangi (Filarial nematode worm)).